Reading from the N-terminus, the 443-residue chain is C4-dicarboxylate transport protein (443 aa).

The next 7 helical transmembrane spans lie at 7 to 26, 46 to 63, 76 to 98, 140 to 162, 183 to 205, 218 to 240, and 350 to 372; these read SLYV…GALF, MVIA…VAHM, ALIY…MNVL, LVSA…FGFA, VVFV…AMAF, LGYL…LGLI, and FITL…ALIL. The tract at residues 415-443 is disordered; sequence GEDLPTTEPDVASEERGEGREIDSSRPVT. Over residues 427-443 the composition is skewed to basic and acidic residues; the sequence is SEERGEGREIDSSRPVT.

This sequence belongs to the dicarboxylate/amino acid:cation symporter (DAACS) (TC 2.A.23) family.

Its subcellular location is the cell membrane. Functionally, responsible for the transport of dicarboxylates such as succinate, fumarate, and malate across the membrane. The protein is C4-dicarboxylate transport protein (dctA) of Deinococcus radiodurans (strain ATCC 13939 / DSM 20539 / JCM 16871 / CCUG 27074 / LMG 4051 / NBRC 15346 / NCIMB 9279 / VKM B-1422 / R1).